Consider the following 241-residue polypeptide: Uridylate kinase (241 aa).

14 to 17 (KLSG) lines the ATP pocket. A UMP-binding site is contributed by Gly-56. ATP is bound by residues Gly-57 and Arg-61. UMP is bound by residues Asp-77 and 138-145 (TGNPFFTT). ATP contacts are provided by Thr-165, Tyr-171, and Asp-174.

It belongs to the UMP kinase family. As to quaternary structure, homohexamer.

It localises to the cytoplasm. The catalysed reaction is UMP + ATP = UDP + ADP. It functions in the pathway pyrimidine metabolism; CTP biosynthesis via de novo pathway; UDP from UMP (UMPK route): step 1/1. Inhibited by UTP. Its function is as follows. Catalyzes the reversible phosphorylation of UMP to UDP. The protein is Uridylate kinase of Psychrobacter arcticus (strain DSM 17307 / VKM B-2377 / 273-4).